The primary structure comprises 747 residues: uncharacterized protein (747 aa).

Residues 7–27 form a helical membrane-spanning segment; the sequence is FFLKVISVIAPIVIIPTILAN.

The protein resides in the membrane. This is an uncharacterized protein from Ureaplasma parvum serovar 3 (strain ATCC 700970).